Here is a 126-residue protein sequence, read N- to C-terminus: DNA-directed RNA polymerase subunit omega (126 aa).

This sequence belongs to the RNA polymerase subunit omega family. The RNAP catalytic core consists of 2 alpha, 1 beta, 1 beta' and 1 omega subunit. When a sigma factor is associated with the core the holoenzyme is formed, which can initiate transcription.

It carries out the reaction RNA(n) + a ribonucleoside 5'-triphosphate = RNA(n+1) + diphosphate. In terms of biological role, promotes RNA polymerase assembly. Latches the N- and C-terminal regions of the beta' subunit thereby facilitating its interaction with the beta and alpha subunits. This chain is DNA-directed RNA polymerase subunit omega, found in Rickettsia bellii (strain OSU 85-389).